Here is a 212-residue protein sequence, read N- to C-terminus: Small ribosomal subunit protein uS2 (212 aa).

Positions 190-212 (LSPDAPEDQPAPVSEFETKVKMV) are disordered.

The protein belongs to the universal ribosomal protein uS2 family.

This chain is Small ribosomal subunit protein uS2, found in Ignicoccus hospitalis (strain KIN4/I / DSM 18386 / JCM 14125).